We begin with the raw amino-acid sequence, 404 residues long: Phosphopentomutase (404 aa).

Mn(2+) is bound by residues Asp10, Asp303, His308, Asp344, His345, and His356.

It belongs to the phosphopentomutase family. Requires Mn(2+) as cofactor.

Its subcellular location is the cytoplasm. The catalysed reaction is 2-deoxy-alpha-D-ribose 1-phosphate = 2-deoxy-D-ribose 5-phosphate. The enzyme catalyses alpha-D-ribose 1-phosphate = D-ribose 5-phosphate. It functions in the pathway carbohydrate degradation; 2-deoxy-D-ribose 1-phosphate degradation; D-glyceraldehyde 3-phosphate and acetaldehyde from 2-deoxy-alpha-D-ribose 1-phosphate: step 1/2. Isomerase that catalyzes the conversion of deoxy-ribose 1-phosphate (dRib-1-P) and ribose 1-phosphate (Rib-1-P) to deoxy-ribose 5-phosphate (dRib-5-P) and ribose 5-phosphate (Rib-5-P), respectively. This is Phosphopentomutase from Shewanella baltica (strain OS223).